Consider the following 677-residue polypeptide: uncharacterized protein (677 aa).

Helical transmembrane passes span 80-102, 338-360, and 367-386; these read ILSL…RASF, ALLS…LFGF, and LVAM…LLSL. Residues 523 to 556 form a disordered region; sequence DEAASLPSDSSPEEDLDPLEEVESIEGTAEESTR. Residues 533–546 show a composition bias toward acidic residues; the sequence is SPEEDLDPLEEVES.

The protein resides in the cell membrane. This is an uncharacterized protein from Treponema pallidum (strain Nichols).